The following is a 288-amino-acid chain: Geranylgeranyl diphosphate synthase (288 aa).

Positions 43 and 73 each coordinate isopentenyl diphosphate. Asp80 and Asp86 together coordinate Mg(2+). Arg91 contributes to the (2E,6E)-farnesyl diphosphate binding site. Arg92 is a binding site for isopentenyl diphosphate. The (2E,6E)-farnesyl diphosphate site is built by Lys170, Thr171, and Gln205.

This sequence belongs to the FPP/GGPP synthase family. Mg(2+) serves as cofactor.

It catalyses the reaction isopentenyl diphosphate + (2E,6E)-farnesyl diphosphate = (2E,6E,10E)-geranylgeranyl diphosphate + diphosphate. It functions in the pathway isoprenoid biosynthesis; geranylgeranyl diphosphate biosynthesis; geranylgeranyl diphosphate from farnesyl diphosphate and isopentenyl diphosphate: step 1/1. Functionally, catalyzes the condensation of farnesyl diphosphate (FPP) and isopentenyl diphosphate (IPP) to yield geranylgeranyl diphosphate (GGPP) needed for biosynthesis of carotenoids and diterpenes. The polypeptide is Geranylgeranyl diphosphate synthase (crtE) (Cereibacter sphaeroides (strain ATCC 17023 / DSM 158 / JCM 6121 / CCUG 31486 / LMG 2827 / NBRC 12203 / NCIMB 8253 / ATH 2.4.1.) (Rhodobacter sphaeroides)).